We begin with the raw amino-acid sequence, 459 residues long: MSFSWSAKDHKSYTNPPSNPTQGLKRPRNDTGNKVTVVLGAQWGDEGKGKVVDLLATESDLVCRCQGGNNAGHTVVVEGKEYDFHLLPSGIINPKSICVIGNGVVIHLPGLFEEAENNEKKGLKGWEKRLIVSDRAHLVFDFHQVVDGIQETQRQATEGKIIGTTKKGIGPTYASKASRIGLRVCDLLGDFKEFSTKFKNLVEQYQSMYSSLTVDTESQLKKLKEYGERLRPMVRDGVYYMYEALHGPPKKILVEGANAALLDIDFGTYPFVTSSNCTVGGACTGLGIPPLNIGEVYGVSKAYTTRVGIGAFPTEQLNATGELLQTRGHEVGVTTGRKRRCGWLDLVILRYAHMINGFTAIALTKLDILDVLDEIKVGMAYKINGKRIPHFPADMELLHKVEVEYETFPGWKSDTSAARKWNNLPQKAQNYIRFVESHIGVPIKWVGVGKSRECMIQMF.

The segment at methionine 1 to threonine 31 is disordered. Residues tyrosine 13–glutamine 22 are compositionally biased toward polar residues. GTP contacts are provided by residues glycine 44–lysine 50 and glycine 72–threonine 74. Residue aspartate 45 is the Proton acceptor of the active site. Aspartate 45 and glycine 72 together coordinate Mg(2+). Substrate is bound at residue aspartate 45. Residues aspartate 45–lysine 48, asparagine 70–histidine 73, threonine 165, arginine 179, asparagine 258, threonine 273, and arginine 337 contribute to the IMP site. The Proton donor role is filled by histidine 73. Substrate is bound at residue valine 333–arginine 339. GTP-binding positions include arginine 339, lysine 365–aspartate 367, and glycine 447–lysine 450.

It belongs to the adenylosuccinate synthetase family. Homodimer. The cofactor is Mg(2+).

It localises to the cytoplasm. It carries out the reaction IMP + L-aspartate + GTP = N(6)-(1,2-dicarboxyethyl)-AMP + GDP + phosphate + 2 H(+). The protein operates within purine metabolism; AMP biosynthesis via de novo pathway; AMP from IMP: step 1/2. Its function is as follows. Component of the purine nucleotide cycle (PNC), which interconverts IMP and AMP to regulate the nucleotide levels in various tissues, and which contributes to glycolysis and ammoniagenesis. Catalyzes the first committed step in the biosynthesis of AMP from IMP. This is Adenylosuccinate synthetase isozyme 1 C (adss1c) from Salmo salar (Atlantic salmon).